The sequence spans 93 residues: CRISPR-associated endoribonuclease Cas2 (93 aa).

A Mg(2+)-binding site is contributed by aspartate 8.

It belongs to the CRISPR-associated endoribonuclease Cas2 protein family. Homodimer, forms a heterotetramer with a Cas1 homodimer. Requires Mg(2+) as cofactor.

CRISPR (clustered regularly interspaced short palindromic repeat), is an adaptive immune system that provides protection against mobile genetic elements (viruses, transposable elements and conjugative plasmids). CRISPR clusters contain sequences complementary to antecedent mobile elements and target invading nucleic acids. CRISPR clusters are transcribed and processed into CRISPR RNA (crRNA). Functions as a ssRNA-specific endoribonuclease. Involved in the integration of spacer DNA into the CRISPR cassette. The protein is CRISPR-associated endoribonuclease Cas2 of Thermofilum pendens (strain DSM 2475 / Hrk 5).